A 461-amino-acid chain; its full sequence is Argininosuccinate lyase (461 aa).

It belongs to the lyase 1 family. Argininosuccinate lyase subfamily.

It is found in the cytoplasm. It catalyses the reaction 2-(N(omega)-L-arginino)succinate = fumarate + L-arginine. It functions in the pathway amino-acid biosynthesis; L-arginine biosynthesis; L-arginine from L-ornithine and carbamoyl phosphate: step 3/3. With respect to regulation, strongly inhibited by L-arginine. Inhibitory effects are lowered at pH 7.0 compared to those at pH 8.0. At 42 degrees Celsius and pH 8.0, activity decreases to 77% and 25% in the presence of 1 mM and 10 mM arginine, respectively. The other amino and organic acids do not affect activity. Its function is as follows. Catalyzes the last step of arginine biosynthesis, the conversion of argininosuccinate into L-arginine and fumarate. This Nostoc sp. (strain PCC 7120 / SAG 25.82 / UTEX 2576) protein is Argininosuccinate lyase.